Consider the following 97-residue polypeptide: Citrate lyase acyl carrier protein (97 aa).

Position 14 is an O-(phosphoribosyl dephospho-coenzyme A)serine (S14).

This sequence belongs to the CitD family. In terms of assembly, oligomer with a subunit composition of (alpha,beta,gamma)6.

The protein resides in the cytoplasm. Its function is as follows. Covalent carrier of the coenzyme of citrate lyase. The chain is Citrate lyase acyl carrier protein from Cronobacter sakazakii (strain ATCC BAA-894) (Enterobacter sakazakii).